The primary structure comprises 795 residues: Delta-1-pyrroline-5-carboxylate synthase (795 aa).

A glutamate 5-kinase region spans residues 1–361; that stretch reads MLSQVYRYGF…FFSEVKPAGP (361 aa). Substrate contacts are provided by S117, D223, and N246. Residues 266–267 and 305–311 contribute to the ATP site; these read SD and MGGMEAK. K311, K347, and K550 each carry N6-succinyllysine. The interval 362–795 is gamma-glutamyl phosphate reductase; that stretch reads TVEQQGEMAR…NLPIPQRNTN (434 aa).

The protein in the N-terminal section; belongs to the glutamate 5-kinase family. In the C-terminal section; belongs to the gamma-glutamyl phosphate reductase family. Can form homodimers/multimers.

It is found in the mitochondrion matrix. It catalyses the reaction L-glutamate + ATP = L-glutamyl 5-phosphate + ADP. The enzyme catalyses L-glutamate 5-semialdehyde + phosphate + NADP(+) = L-glutamyl 5-phosphate + NADPH + H(+). It functions in the pathway amino-acid biosynthesis; L-proline biosynthesis; L-glutamate 5-semialdehyde from L-glutamate: step 1/2. It participates in amino-acid biosynthesis; L-proline biosynthesis; L-glutamate 5-semialdehyde from L-glutamate: step 2/2. Its function is as follows. Bifunctional enzyme that converts glutamate to glutamate 5-semialdehyde, an intermediate in the biosynthesis of proline, ornithine and arginine. This chain is Delta-1-pyrroline-5-carboxylate synthase (ALDH18A1), found in Pongo abelii (Sumatran orangutan).